A 473-amino-acid polypeptide reads, in one-letter code: Probable cytosolic iron-sulfur protein assembly protein 1 (473 aa).

The interval 1-25 (MPSSTPGGSLKHLSDLTPPSQDRTW) is disordered. WD repeat units lie at residues 11–58 (KHLS…LLST) and 62–104 (GHKR…GRAE). The interval 112 to 133 (GGLAEADRQEGDDTDGDEEDED) is disordered. Over residues 123–133 (DDTDGDEEDED) the composition is skewed to acidic residues. WD repeat units follow at residues 144 to 183 (GHDS…DNNF), 191 to 230 (EHSG…WGQV), 235 to 313 (GHEG…KPPP), and 341 to 380 (MHDL…KPPV). The tract at residues 377–405 (KPPVHTTSEQDKPDSARETQKANGERTAP) is disordered. The span at 384 to 400 (SEQDKPDSARETQKANG) shows a compositional bias: basic and acidic residues. The stretch at 438 to 473 (SQQQNFDNSEMDHANEEEVLLSTGDDGVVRVWTLER) is one WD 7 repeat.

This sequence belongs to the WD repeat CIA1 family.

Functionally, essential component of the cytosolic iron-sulfur (Fe/S) protein assembly machinery. Required for the maturation of extramitochondrial Fe/S proteins. The chain is Probable cytosolic iron-sulfur protein assembly protein 1 from Coccidioides immitis (strain RS) (Valley fever fungus).